A 307-amino-acid chain; its full sequence is Transposase InsD for insertion element IS2-9 (307 aa).

Positions 112–295 (KPAVPPSKRA…SPREYLRQRA (184 aa)) constitute an Integrase catalytic domain.

Involved in the transposition of the insertion sequence IS2. In Escherichia coli (strain K12), this protein is Transposase InsD for insertion element IS2-9.